The sequence spans 354 residues: Probable cinnamyl alcohol dehydrogenase 1 (354 aa).

The Zn(2+) site is built by Cys-47, His-69, Glu-70, Cys-100, Cys-103, Cys-106, Cys-114, and Cys-163. NADP(+)-binding positions include Thr-167, 188 to 193 (GLGGLG), 211 to 216 (STSESK), Thr-251, and 297 to 299 (SVT).

This sequence belongs to the zinc-containing alcohol dehydrogenase family. In terms of assembly, homodimer. Requires Zn(2+) as cofactor.

The catalysed reaction is (E)-cinnamyl alcohol + NADP(+) = (E)-cinnamaldehyde + NADPH + H(+). The enzyme catalyses (E)-coniferol + NADP(+) = (E)-coniferaldehyde + NADPH + H(+). It carries out the reaction (E)-sinapyl alcohol + NADP(+) = (E)-sinapaldehyde + NADPH + H(+). It catalyses the reaction (E)-4-coumaroyl alcohol + NADP(+) = (E)-4-coumaraldehyde + NADPH + H(+). The catalysed reaction is (E)-caffeyl alcohol + NADP(+) = (E)-caffeyl aldehyde + NADPH + H(+). It participates in aromatic compound metabolism; phenylpropanoid biosynthesis. Functionally, involved in lignin biosynthesis. Catalyzes the final step specific for the production of lignin monomers. Catalyzes the NADPH-dependent reduction of coniferaldehyde, 5-hydroxyconiferaldehyde, sinapaldehyde, 4-coumaraldehyde and caffeyl aldehyde to their respective alcohols. The sequence is that of Probable cinnamyl alcohol dehydrogenase 1 from Oryza sativa subsp. japonica (Rice).